The following is a 273-amino-acid chain: HTH-type transcriptional activator RhaS (273 aa).

The 99-residue stretch at 174 to 272 (YQLLDWLQNN…SQSPRDLRSQ (99 aa)) folds into the HTH araC/xylS-type domain. 2 consecutive DNA-binding regions (H-T-H motif) follow at residues 191–212 (PELA…KNKT) and 239–262 (VTDI…KREF).

As to quaternary structure, binds DNA as a dimer.

Its subcellular location is the cytoplasm. In terms of biological role, activates expression of the rhaBAD and rhaT operons. In Yersinia pestis bv. Antiqua (strain Antiqua), this protein is HTH-type transcriptional activator RhaS.